The sequence spans 126 residues: MPEPVKSAPVPKKGSKKAINKAQKKDGKKRKRSRKESYSVYVYKVLKQVHPDTGISSKAMGIMNSFVNDIFERIAGEASRLAHYNKRSTITSREIQTAVRLLLPGELAKHAVSEGTKAVTKYTSSK.

The segment at 1-36 (MPEPVKSAPVPKKGSKKAINKAQKKDGKKRKRSRKE) is disordered. Residue P2 is modified to N-acetylproline. At E3 the chain carries ADP-ribosyl glutamic acid. Residue K6 is modified to N6-(2-hydroxyisobutyryl)lysine; alternate. K6 carries the N6-(beta-hydroxybutyryl)lysine; alternate modification. N6-acetyllysine; alternate is present on K6. At K6 the chain carries N6-butyryllysine; alternate. K6 is subject to N6-crotonyllysine; alternate. An N6-lactoyllysine; alternate modification is found at K6. A Glycyl lysine isopeptide (Lys-Gly) (interchain with G-Cter in SUMO2); alternate cross-link involves residue K6. The residue at position 7 (S7) is an ADP-ribosylserine. The residue at position 12 (K12) is an N6-(beta-hydroxybutyryl)lysine; alternate. Residues K12 and K13 each carry the N6-acetyllysine; alternate modification. An N6-crotonyllysine; alternate mark is found at K12 and K13. Position 12 is an N6-lactoyllysine; alternate (K12). K13 is subject to N6-(2-hydroxyisobutyryl)lysine; alternate. Residue S15 is modified to Phosphoserine; by STK4/MST1. N6-acetyllysine; alternate is present on residues K16, K17, K21, and K24. K16, K17, K21, and K24 each carry N6-crotonyllysine; alternate. 4 positions are modified to N6-lactoyllysine; alternate: K16, K17, K21, and K24. N6-(beta-hydroxybutyryl)lysine; alternate occurs at positions 17 and 21. N6-glutaryllysine; alternate is present on K17. 2 positions are modified to N6-(2-hydroxyisobutyryl)lysine; alternate: K21 and K24. Residue K21 is modified to N6-butyryllysine; alternate. A Glycyl lysine isopeptide (Lys-Gly) (interchain with G-Cter in SUMO2); alternate cross-link involves residue K21. Residue K25 is modified to N6-(2-hydroxyisobutyryl)lysine. Residue K35 is modified to N6-(2-hydroxyisobutyryl)lysine; alternate. K35 carries the post-translational modification N6-(beta-hydroxybutyryl)lysine; alternate. N6-crotonyllysine; alternate is present on K35. At K35 the chain carries N6-glutaryllysine; alternate. N6-succinyllysine; alternate is present on K35. K35 participates in a covalent cross-link: Glycyl lysine isopeptide (Lys-Gly) (interchain with G-Cter in ubiquitin); alternate. Position 36 is a polyADP-ribosyl glutamic acid (E36). S37 is modified (phosphoserine; by AMPK). An N6-(2-hydroxyisobutyryl)lysine; alternate mark is found at K44, K47, and K58. Position 44 is an N6-lactoyllysine; alternate (K44). An N6-glutaryllysine; alternate mark is found at K44 and K47. Residue K47 is modified to N6-methyllysine; alternate. K58 is modified (N6,N6-dimethyllysine; alternate). Dimethylated arginine is present on R80. At K86 the chain carries N6-(2-hydroxyisobutyryl)lysine; alternate. Residue K86 is modified to N6-(beta-hydroxybutyryl)lysine; alternate. Position 86 is an N6-acetyllysine; alternate (K86). K86 is subject to N6-lactoyllysine; alternate. K86 carries the post-translational modification N6,N6,N6-trimethyllysine; alternate. An omega-N-methylarginine mark is found at R87 and R93. K109 carries the post-translational modification N6-(2-hydroxyisobutyryl)lysine; alternate. N6-lactoyllysine; alternate is present on K109. At K109 the chain carries N6-glutaryllysine; alternate. K109 is subject to N6-methyllysine; alternate. An O-linked (GlcNAc) serine glycan is attached at S113. T116 is modified (phosphothreonine). N6-(2-hydroxyisobutyryl)lysine; alternate occurs at positions 117 and 121. Residues K117 and K121 each carry the N6-(beta-hydroxybutyryl)lysine; alternate modification. An N6-lactoyllysine; alternate mark is found at K117 and K121. K117 and K121 each carry N6-glutaryllysine; alternate. An N6-succinyllysine; alternate mark is found at K117 and K121. An N6-malonyllysine; alternate modification is found at K117. Residue K117 is modified to N6-methylated lysine; alternate. K121 is covalently cross-linked (Glycyl lysine isopeptide (Lys-Gly) (interchain with G-Cter in ubiquitin); alternate).

The protein belongs to the histone H2B family. The nucleosome is a histone octamer containing two molecules each of H2A, H2B, H3 and H4 assembled in one H3-H4 heterotetramer and two H2A-H2B heterodimers. The octamer wraps approximately 147 bp of DNA. Monoubiquitination at Lys-35 (H2BK34Ub) by the MSL1/MSL2 dimer is required for histone H3 'Lys-4' (H3K4me) and 'Lys-79' (H3K79me) methylation and transcription activation at specific gene loci, such as HOXA9 and MEIS1 loci. Similarly, monoubiquitination at Lys-121 (H2BK120Ub) by the RNF20/40 complex gives a specific tag for epigenetic transcriptional activation and is also prerequisite for histone H3 'Lys-4' and 'Lys-79' methylation. It also functions cooperatively with the FACT dimer to stimulate elongation by RNA polymerase II. H2BK120Ub also acts as a regulator of mRNA splicing: deubiquitination by USP49 is required for efficient cotranscriptional splicing of a large set of exons. Post-translationally, phosphorylation at Ser-37 (H2BS36ph) by AMPK in response to stress promotes transcription. Phosphorylated on Ser-15 (H2BS14ph) by STK4/MST1 during apoptosis; which facilitates apoptotic chromatin condensation. Also phosphorylated on Ser-15 in response to DNA double strand breaks (DSBs), and in correlation with somatic hypermutation and immunoglobulin class-switch recombination. In terms of processing, glcNAcylation at Ser-113 promotes monoubiquitination of Lys-121. It fluctuates in response to extracellular glucose, and associates with transcribed genes. ADP-ribosylated by PARP1 or PARP2 on Ser-7 (H2BS6ADPr) in response to DNA damage. H2BS6ADPr promotes recruitment of CHD1L. Mono-ADP-ribosylated on Glu-3 (H2BE2ADPr) by PARP3 in response to single-strand breaks. Poly ADP-ribosylation on Glu-36 (H2BE35ADPr) by PARP1 regulates adipogenesis: it inhibits phosphorylation at Ser-37 (H2BS36ph), thereby blocking expression of pro-adipogenetic genes. Post-translationally, crotonylation (Kcr) is specifically present in male germ cells and marks testis-specific genes in post-meiotic cells, including X-linked genes that escape sex chromosome inactivation in haploid cells. Crotonylation marks active promoters and enhancers and confers resistance to transcriptional repressors. It is also associated with post-meiotically activated genes on autosomes. In terms of processing, lactylated in macrophages by EP300/P300 by using lactoyl-CoA directly derived from endogenous or exogenous lactate, leading to stimulates gene transcription.

The protein localises to the nucleus. The protein resides in the chromosome. In terms of biological role, core component of nucleosome. Nucleosomes wrap and compact DNA into chromatin, limiting DNA accessibility to the cellular machineries which require DNA as a template. Histones thereby play a central role in transcription regulation, DNA repair, DNA replication and chromosomal stability. DNA accessibility is regulated via a complex set of post-translational modifications of histones, also called histone code, and nucleosome remodeling. The protein is Histone H2B type 1-M of Homo sapiens (Human).